The sequence spans 400 residues: Endoglucanase A (400 aa).

Residues 1–32 (MTKTFKKFSIAGLALLFMATAAFAGWSTKASA) form the signal peptide. E187 acts as the Proton donor in catalysis. E328 (nucleophile) is an active-site residue.

It belongs to the glycosyl hydrolase 5 (cellulase A) family.

It localises to the secreted. The catalysed reaction is Endohydrolysis of (1-&gt;4)-beta-D-glucosidic linkages in cellulose, lichenin and cereal beta-D-glucans.. With respect to regulation, strongly inhibited by Hg(2+), Ag(+) and Fe(3+). To a lesser extent, is also inhibited by Pb(2+), Mn(2+), Sn(2+) and Cu(2+). By contrast, Ni(2+), Zn(2+), Co(2+), Ba(2+) and NH(4)(+) do not affect enzyme activity, while 10 mM Ca(2+), and Mg(2+) produce a stimulating effect. Is also strongly inhibited by chemicals such as N-bromosuccinimide and dimethyl(2-dihydroxy-5-nitrobenzyl)sulphonium bromide. Is not affected by N-acetylimidazole. Functionally, endoglucanase with high activity on carboxymethylcellulose (CMC) and lichenan, but not active on Avicel. In Paenibacillus barcinonensis, this protein is Endoglucanase A (celA).